Reading from the N-terminus, the 750-residue chain is DDT domain-containing protein DDR4 (750 aa).

Residues 1–125 (MGSSSDIVPD…ITSLVPPPEP (125 aa)) are disordered. Residues 45–54 (RAQQRLQELQ) show a composition bias toward low complexity. Basic and acidic residues predominate over residues 55–77 (AAERKLKPPKKEYKREQHRRREE). Positions 78 to 100 (VVEEDEDSEDDDQEDEENDGDDE) are enriched in acidic residues. In terms of domain architecture, DDT spans 133 to 192 (LRSMWELASVLNFLHVFRPLLKINAEFSAEEFETALLTPNDTLSDIHIPLLKAIPPVTRM). 2 disordered regions span residues 450-505 (NGRS…TDFV) and 532-750 (LKKR…TDNS). Over residues 451–471 (GRSTSSTHPTEPVNDTASGRS) the composition is skewed to polar residues. Residues 545-585 (EGDEEKGDEEYKWDEDNAEYEEEEEEEEEEDSLSASEEDSD) are compositionally biased toward acidic residues. Over residues 595–606 (RRETKLRSRSND) the composition is skewed to basic and acidic residues. A compositionally biased stretch (polar residues) spans 688–707 (NADTTNGKENNQLNKSNGTT). Residues 741–750 (LKDDDKTDNS) show a composition bias toward basic and acidic residues.

In terms of assembly, interacts (via the DDT domain) with CHR11 (via C-terminus).

It is found in the nucleus. Probable transcription regulator. The polypeptide is DDT domain-containing protein DDR4 (Arabidopsis thaliana (Mouse-ear cress)).